The following is a 441-amino-acid chain: NADH-quinone oxidoreductase subunit D 1 (441 aa).

The protein belongs to the complex I 49 kDa subunit family. In terms of assembly, NDH-1 is composed of 14 different subunits. Subunits NuoB, C, D, E, F, and G constitute the peripheral sector of the complex.

It localises to the cell membrane. The catalysed reaction is a quinone + NADH + 5 H(+)(in) = a quinol + NAD(+) + 4 H(+)(out). NDH-1 shuttles electrons from NADH, via FMN and iron-sulfur (Fe-S) centers, to quinones in the respiratory chain. The immediate electron acceptor for the enzyme in this species is believed to be a menaquinone. Couples the redox reaction to proton translocation (for every two electrons transferred, four hydrogen ions are translocated across the cytoplasmic membrane), and thus conserves the redox energy in a proton gradient. The protein is NADH-quinone oxidoreductase subunit D 1 of Salinispora tropica (strain ATCC BAA-916 / DSM 44818 / JCM 13857 / NBRC 105044 / CNB-440).